Consider the following 385-residue polypeptide: Alkanesulfonate monooxygenase (385 aa).

Belongs to the SsuD family.

The catalysed reaction is an alkanesulfonate + FMNH2 + O2 = an aldehyde + FMN + sulfite + H2O + 2 H(+). In terms of biological role, catalyzes the desulfonation of aliphatic sulfonates. This Burkholderia pseudomallei (strain 1710b) protein is Alkanesulfonate monooxygenase.